We begin with the raw amino-acid sequence, 523 residues long: MNKAINIKKTAPLEVLHSELPYTQDPTALFHALCAGRSDCLLLESAEIDSKQNLKSLLLVDAAVRIVCEGHQVTYHALSANGQALLNIIHSNLTDRIPCKVEKAKLTLTFSTPCDTLDEDSRLREASSFDALRLVQHSFDLTDHGKFALFLGGLFAYDLVANFEPLGEAPADNQCPDYVFYVAETLMVIDHQRETCQLQATQFQPGDALHSQLKSRMREIRAQVNQKLPLPSAQSLSDVEVTTNISDAAFCDIVRDLKQYVVKGDVFQVVPSRRFRLPCPSPLAAYQRLKQSNPSPYMFYMQDERFTLFGASPESALKYEMHTNQVEIYPIAGTRRRGKRADGSIDFDLDSRIELELRTDKKENAEHMMLVDLARNDVARISQAGTRHVADLLQVDRYSHVMHLVSRVVGQLREDLDALHAYQACMNMGTLTGAPKIRAMQLIRDVEQARRGSYGGAVGYLTGEGDLDTCIVIRSAYVENGIAQVQAGAGVVYDSDPQAEADETRGKAQAVISAILYAHQGKE.

L-tryptophan-binding positions include S45 and 296–298 (PYM). Residue 333-334 (GT) participates in chorismate binding. E366 serves as a coordination point for Mg(2+). Chorismate is bound by residues Y454, R474, 488-490 (GAG), and G490. E503 is a Mg(2+) binding site.

This sequence belongs to the anthranilate synthase component I family. In terms of assembly, heterotetramer consisting of two non-identical subunits: a beta subunit (TrpG) and a large alpha subunit (TrpE). Requires Mg(2+) as cofactor.

The catalysed reaction is chorismate + L-glutamine = anthranilate + pyruvate + L-glutamate + H(+). The protein operates within amino-acid biosynthesis; L-tryptophan biosynthesis; L-tryptophan from chorismate: step 1/5. Feedback inhibited by tryptophan. Functionally, part of a heterotetrameric complex that catalyzes the two-step biosynthesis of anthranilate, an intermediate in the biosynthesis of L-tryptophan. In the first step, the glutamine-binding beta subunit (TrpG) of anthranilate synthase (AS) provides the glutamine amidotransferase activity which generates ammonia as a substrate that, along with chorismate, is used in the second step, catalyzed by the large alpha subunit of AS (TrpE) to produce anthranilate. In the absence of TrpG, TrpE can synthesize anthranilate directly from chorismate and high concentrations of ammonia. This is Anthranilate synthase component 1 (trpE) from Vibrio cholerae serotype O1 (strain ATCC 39315 / El Tor Inaba N16961).